The sequence spans 568 residues: MSKISRRAYADMYGPTVGDKVRLADTALWIQVEKDFTIYGEEVKFGGGKVIRDGMGQSQATSDKTPDTVITNALILDHWGIVKADVAIKNGRISAIGKAGNPDIQPGVTIIVGPCTEVIAGEGQILTAGAIDSHIHFICPQQIDEALMSGTTTMIGGGTGPATGTNATTCTPGKWHIGKMLQAGESFAMNLGFLGKGNASLPGGLNEQLEAGALGLKLHEDWGTTPASIDNCLTVAENYDVQVAIHTDTLNESGFVEDTLAAFKGRTIHTYHTEGAGGGHAPDIIKACGSSNVLPSSTNPTRPYTVNTVDEHLDMLMVCHHLDPNIPEDVAFADSRIRKETIAAEDILHDLGAFSMIASDSQAMGRVGEVICRTWQTAHKMKVQRGLLPEDEGTGADNFRAKRYIAKYTINPALAHGVAHEVGSIEVGKLADIILWKPAFFGVKPSLIIKGGAIAAAPMGDPNASIPTPQPVHYRKMFGAYGQACKQTSVSFVSQAAIDASISDYFQLERRLVAVKNCRSVTKADMVHNAYQPHMEVDPETYEVRADGQLLTCEPAEELPMAQRYFLF.

One can recognise a Urease domain in the interval 129–568 (GAIDSHIHFI…LPMAQRYFLF (440 aa)). Positions 134, 136, and 217 each coordinate Ni(2+). N6-carboxylysine is present on lysine 217. Histidine 219 provides a ligand contact to substrate. 2 residues coordinate Ni(2+): histidine 246 and histidine 272. The active-site Proton donor is the histidine 320. Residue aspartate 360 coordinates Ni(2+).

The protein belongs to the metallo-dependent hydrolases superfamily. Urease alpha subunit family. As to quaternary structure, heterotrimer of UreA (gamma), UreB (beta) and UreC (alpha) subunits. Three heterotrimers associate to form the active enzyme. It depends on Ni cation as a cofactor. Post-translationally, carboxylation allows a single lysine to coordinate two nickel ions.

It localises to the cytoplasm. It carries out the reaction urea + 2 H2O + H(+) = hydrogencarbonate + 2 NH4(+). The protein operates within nitrogen metabolism; urea degradation; CO(2) and NH(3) from urea (urease route): step 1/1. This is Urease subunit alpha from Saccharophagus degradans (strain 2-40 / ATCC 43961 / DSM 17024).